A 438-amino-acid polypeptide reads, in one-letter code: Transcriptional regulator Mb0495 (438 aa).

Residues 1-12 are compositionally biased toward polar residues; it reads MYSTNRTSQSLS. A disordered region spans residues 1–22; the sequence is MYSTNRTSQSLSRKPGRKHQLR. A DNA-binding region (H-T-H motif) is located at residues 52–73; that stretch reads VGRDVIAGSTSLSIATVNRQVI.

It belongs to the ROK (NagC/XylR) family.

In terms of biological role, positively regulates the expression of PE13 and PPE18. This Mycobacterium bovis (strain ATCC BAA-935 / AF2122/97) protein is Transcriptional regulator Mb0495.